A 209-amino-acid chain; its full sequence is Uracil phosphoribosyltransferase (209 aa).

5-phospho-alpha-D-ribose 1-diphosphate contacts are provided by residues Arg79, Arg104, and 131 to 139; that span reads DPMLATGGS. Uracil is bound by residues Ile194 and 199 to 201; that span reads GDA. Asp200 lines the 5-phospho-alpha-D-ribose 1-diphosphate pocket.

This sequence belongs to the UPRTase family. Mg(2+) serves as cofactor.

The catalysed reaction is UMP + diphosphate = 5-phospho-alpha-D-ribose 1-diphosphate + uracil. It functions in the pathway pyrimidine metabolism; UMP biosynthesis via salvage pathway; UMP from uracil: step 1/1. Allosterically activated by GTP. Catalyzes the conversion of uracil and 5-phospho-alpha-D-ribose 1-diphosphate (PRPP) to UMP and diphosphate. This Streptococcus uberis (strain ATCC BAA-854 / 0140J) protein is Uracil phosphoribosyltransferase.